The primary structure comprises 583 residues: Threonine--tRNA ligase (583 aa).

Residues 185-478 (DHRKLGRELN…LVEHYGGAFP (294 aa)) are catalytic. Zn(2+) contacts are provided by Cys278, His329, and His455.

This sequence belongs to the class-II aminoacyl-tRNA synthetase family. As to quaternary structure, homodimer. Requires Zn(2+) as cofactor.

Its subcellular location is the cytoplasm. It carries out the reaction tRNA(Thr) + L-threonine + ATP = L-threonyl-tRNA(Thr) + AMP + diphosphate + H(+). Its function is as follows. Catalyzes the attachment of threonine to tRNA(Thr) in a two-step reaction: L-threonine is first activated by ATP to form Thr-AMP and then transferred to the acceptor end of tRNA(Thr). Also edits incorrectly charged L-seryl-tRNA(Thr). This is Threonine--tRNA ligase from Borrelia duttonii (strain Ly).